The following is a 539-amino-acid chain: O-phosphoserine--tRNA(Cys) ligase (539 aa).

Residues 188 to 190 (HMT), 233 to 235 (SAS), 275 to 276 (YY), and Asn327 contribute to the substrate site.

The protein belongs to the class-II aminoacyl-tRNA synthetase family. O-phosphoseryl-tRNA(Cys) synthetase subfamily. In terms of assembly, homotetramer. Interacts with SepCysS.

The enzyme catalyses tRNA(Cys) + O-phospho-L-serine + ATP = O-phospho-L-seryl-tRNA(Cys) + AMP + diphosphate. Its function is as follows. Catalyzes the attachment of O-phosphoserine (Sep) to tRNA(Cys). The polypeptide is O-phosphoserine--tRNA(Cys) ligase (Methanosarcina barkeri (strain Fusaro / DSM 804)).